Consider the following 427-residue polypeptide: uncharacterized protein (427 aa).

This is an uncharacterized protein from Human herpesvirus 7 (strain JI) (HHV-7).